Consider the following 267-residue polypeptide: Sorbitol-6-phosphate 2-dehydrogenase (267 aa).

9–38 (DNVIIVTGGASGIGLAIVDELLSQGAHVQM) provides a ligand contact to NAD(+). Ser147 is a binding site for substrate. The active-site Proton acceptor is the Tyr160.

It belongs to the short-chain dehydrogenases/reductases (SDR) family. As to quaternary structure, homotetramer.

It carries out the reaction D-sorbitol 6-phosphate + NAD(+) = beta-D-fructose 6-phosphate + NADH + H(+). It functions in the pathway carbohydrate metabolism; D-sorbitol degradation; D-fructose 6-phosphate from D-sorbitol 6-phosphate: step 1/1. The protein is Sorbitol-6-phosphate 2-dehydrogenase (sorD) of Klebsiella pneumoniae.